Reading from the N-terminus, the 646-residue chain is Lipoteichoic acid synthase (646 aa).

Residues 1–7 are Cytoplasmic-facing; that stretch reads MSLPKKK. Residues 8-28 form a helical membrane-spanning segment; it reads IGIFAFFLLTVFTITLKTYFS. Topologically, residues 29–43 are extracellular; it reads YYVDFSLGVKGLVQN. The chain crosses the membrane as a helical span at residues 44 to 64; sequence LILIMNPYSLIALVLSVFLFF. The Cytoplasmic segment spans residues 65–68; it reads KGKK. The chain crosses the membrane as a helical span at residues 69–89; the sequence is AFWFIFIGGFLLTFLLYANVV. At 90-119 the chain is on the extracellular side; the sequence is YFRFFSDFLTFSTLNQAGNVESMGGAVSAS. Residues 120–140 form a helical membrane-spanning segment; sequence FKWYDFVYFIDTIIYLAILIF. Residues 141-153 are Cytoplasmic-facing; that stretch reads KRKWLDNRAFSKK. The helical transmembrane segment at 154–174 threads the bilayer; sequence FVPVVMATSVALFFLNLAFAE. At 175–646 the chain is on the extracellular side; it reads TDRPELLTRT…KSGPKGNEKK (472 aa). 2 residues coordinate Mn(2+): Glu255 and Thr300. Residue Thr300 is part of the active site. His416 is a substrate binding site. Mn(2+) contacts are provided by Asp475 and His476.

The protein belongs to the LTA synthase family. Proteolytically cleaved.

Its subcellular location is the cell membrane. It is found in the secreted. It participates in cell wall biogenesis; lipoteichoic acid biosynthesis. In terms of biological role, catalyzes the polymerization of lipoteichoic acid (LTA) polyglycerol phosphate, a reaction that presumably uses phosphatidylglycerol (PG) as substrate. Is required for staphylococcal growth and cell division process. This is Lipoteichoic acid synthase (ltaS) from Staphylococcus epidermidis (strain ATCC 12228 / FDA PCI 1200).